Consider the following 393-residue polypeptide: SH3 domain-binding protein 5-like (393 aa).

2 disordered regions span residues 1–59 (MAEL…LDPR) and 272–332 (HARR…DTDT). The residue at position 13 (Thr13) is a Phosphothreonine. Positions 18–28 (LRPEVVEDEVP) are enriched in basic and acidic residues. Ser30 and Ser49 each carry phosphoserine. Coiled coils occupy residues 59 to 140 (RIQE…YERA) and 169 to 272 (WQEM…EQIH). Gly residues predominate over residues 304–313 (GDSGIEGAEG). Over residues 317 to 332 (EEGSSLGPGPAPDTDT) the composition is skewed to low complexity. Residues Ser343, Ser350, Ser358, Ser362, and Ser378 each carry the phosphoserine modification. The interval 364–393 (DGQELGTRSGGRRGSDGGVRGGRHQRSVSL) is disordered. Residues 384–393 (GGRHQRSVSL) show a composition bias toward basic residues.

Belongs to the SH3BP5 family.

In terms of biological role, functions as a guanine nucleotide exchange factor (GEF) for RAB11A. The sequence is that of SH3 domain-binding protein 5-like (SH3BP5L) from Pongo abelii (Sumatran orangutan).